The sequence spans 165 residues: Thiol peroxidase (165 aa).

The Thioredoxin domain maps to Arg18–Lys164. Cys60 (cysteine sulfenic acid (-SOH) intermediate) is an active-site residue. Residues Cys60 and Cys94 are joined by a disulfide bond.

Belongs to the peroxiredoxin family. Tpx subfamily. Homodimer.

It carries out the reaction a hydroperoxide + [thioredoxin]-dithiol = an alcohol + [thioredoxin]-disulfide + H2O. In terms of biological role, thiol-specific peroxidase that catalyzes the reduction of hydrogen peroxide and organic hydroperoxides to water and alcohols, respectively. Plays a role in cell protection against oxidative stress by detoxifying peroxides. This chain is Thiol peroxidase, found in Listeria monocytogenes serovar 1/2a (strain ATCC BAA-679 / EGD-e).